The following is a 147-amino-acid chain: Testis-expressed protein 29 (147 aa).

Over 1 to 57 the chain is Extracellular; sequence MRYAPEFKKSPSHLLKKFAVCDIPLYDICDYNVSRDRCKELGCCFYKGICYEKAVPS. Residues 58–78 form a helical membrane-spanning segment; it reads YVQVFSALIVIIAGAFVITII. At 79–147 the chain is on the cytoplasmic side; sequence YRVIQESRRE…IVTEEEETED (69 aa). Residues 86–147 are disordered; it reads RREKEVPTEA…IVTEEEETED (62 aa). Polar residues predominate over residues 99–108; that stretch reads AKSSVQVETQ. The span at 109–120 shows a compositional bias: low complexity; it reads PPSSAGAGSKAP. The segment covering 125–135 has biased composition (basic and acidic residues); the sequence is PQSKESGREDA.

Its subcellular location is the membrane. This is Testis-expressed protein 29 (TEX29) from Bos taurus (Bovine).